The primary structure comprises 540 residues: Phosphoenolpyruvate carboxykinase (ATP) (540 aa).

Substrate is bound at residue Arg65. Residue Lys87 is modified to N6-acetyllysine. Substrate is bound by residues Tyr207 and Lys213. Residues Lys213, His232, and Gly248–Thr256 each bind ATP. Residues Lys213 and His232 each contribute to the Mn(2+) site. Position 269 (Asp269) interacts with Mn(2+). ATP is bound by residues Glu297, Arg333, Arg449–Ile450, and Thr455. Arg333 serves as a coordination point for substrate. Lys523 is modified (N6-acetyllysine).

The protein belongs to the phosphoenolpyruvate carboxykinase (ATP) family. In terms of assembly, monomer. It depends on Mn(2+) as a cofactor.

It is found in the cytoplasm. It carries out the reaction oxaloacetate + ATP = phosphoenolpyruvate + ADP + CO2. It participates in carbohydrate biosynthesis; gluconeogenesis. Involved in the gluconeogenesis. Catalyzes the conversion of oxaloacetate (OAA) to phosphoenolpyruvate (PEP) through direct phosphoryl transfer between the nucleoside triphosphate and OAA. This Escherichia coli O127:H6 (strain E2348/69 / EPEC) protein is Phosphoenolpyruvate carboxykinase (ATP).